Consider the following 389-residue polypeptide: Lipid-A-disaccharide synthase (389 aa).

The protein belongs to the LpxB family.

It carries out the reaction a lipid X + a UDP-2-N,3-O-bis[(3R)-3-hydroxyacyl]-alpha-D-glucosamine = a lipid A disaccharide + UDP + H(+). The protein operates within bacterial outer membrane biogenesis; LPS lipid A biosynthesis. In terms of biological role, condensation of UDP-2,3-diacylglucosamine and 2,3-diacylglucosamine-1-phosphate to form lipid A disaccharide, a precursor of lipid A, a phosphorylated glycolipid that anchors the lipopolysaccharide to the outer membrane of the cell. The protein is Lipid-A-disaccharide synthase of Paraburkholderia phytofirmans (strain DSM 17436 / LMG 22146 / PsJN) (Burkholderia phytofirmans).